A 62-amino-acid polypeptide reads, in one-letter code: Photosystem II reaction center protein Z (62 aa).

The next 2 helical transmembrane spans lie at 8-28 and 41-61; these read AVFALIVTSFLLVIGVPVVLA and FSGASLWIGLVFLVGILNSFV.

This sequence belongs to the PsbZ family. As to quaternary structure, PSII is composed of 1 copy each of membrane proteins PsbA, PsbB, PsbC, PsbD, PsbE, PsbF, PsbH, PsbI, PsbJ, PsbK, PsbL, PsbM, PsbT, PsbY, PsbZ, Psb30/Ycf12, at least 3 peripheral proteins of the oxygen-evolving complex and a large number of cofactors. It forms dimeric complexes.

Its subcellular location is the plastid. The protein localises to the chloroplast thylakoid membrane. Functionally, may control the interaction of photosystem II (PSII) cores with the light-harvesting antenna, regulates electron flow through the 2 photosystem reaction centers. PSII is a light-driven water plastoquinone oxidoreductase, using light energy to abstract electrons from H(2)O, generating a proton gradient subsequently used for ATP formation. This chain is Photosystem II reaction center protein Z, found in Zygnema circumcarinatum (Green alga).